The chain runs to 668 residues: Bifunctional polymyxin resistance protein ArnA (668 aa).

The tract at residues 1–307 is formyltransferase ArnAFT; the sequence is MSAKTVVFAY…ELGLVDGSLL (307 aa). H106 acts as the Proton donor; for formyltransferase activity in catalysis. (6R)-10-formyltetrahydrofolate is bound by residues R116 and 138-142; that span reads VKRAD. The interval 317-668 is dehydrogenase ArnADH; that stretch reads RRTRVLILGV…IERPSNKEAC (352 aa). Residues D350 and 371–372 contribute to the NAD(+) site; that span reads DI. Residues A396, Y401, and 435 to 436 each bind UDP-alpha-D-glucuronate; that span reads TS. E437 (proton acceptor; for decarboxylase activity) is an active-site residue. UDP-alpha-D-glucuronate is bound by residues R463, N494, 528–537, and Y615; that span reads RLFDGGEQKR. R621 acts as the Proton donor; for decarboxylase activity in catalysis.

This sequence in the N-terminal section; belongs to the Fmt family. UDP-L-Ara4N formyltransferase subfamily. In the C-terminal section; belongs to the NAD(P)-dependent epimerase/dehydratase family. UDP-glucuronic acid decarboxylase subfamily. In terms of assembly, homohexamer, formed by a dimer of trimers.

The catalysed reaction is UDP-alpha-D-glucuronate + NAD(+) = UDP-beta-L-threo-pentopyranos-4-ulose + CO2 + NADH. It carries out the reaction UDP-4-amino-4-deoxy-beta-L-arabinose + (6R)-10-formyltetrahydrofolate = UDP-4-deoxy-4-formamido-beta-L-arabinose + (6S)-5,6,7,8-tetrahydrofolate + H(+). It participates in nucleotide-sugar biosynthesis; UDP-4-deoxy-4-formamido-beta-L-arabinose biosynthesis; UDP-4-deoxy-4-formamido-beta-L-arabinose from UDP-alpha-D-glucuronate: step 1/3. The protein operates within nucleotide-sugar biosynthesis; UDP-4-deoxy-4-formamido-beta-L-arabinose biosynthesis; UDP-4-deoxy-4-formamido-beta-L-arabinose from UDP-alpha-D-glucuronate: step 3/3. Its pathway is bacterial outer membrane biogenesis; lipopolysaccharide biosynthesis. In terms of biological role, bifunctional enzyme that catalyzes the oxidative decarboxylation of UDP-glucuronic acid (UDP-GlcUA) to UDP-4-keto-arabinose (UDP-Ara4O) and the addition of a formyl group to UDP-4-amino-4-deoxy-L-arabinose (UDP-L-Ara4N) to form UDP-L-4-formamido-arabinose (UDP-L-Ara4FN). The modified arabinose is attached to lipid A and is required for resistance to polymyxin and cationic antimicrobial peptides. The protein is Bifunctional polymyxin resistance protein ArnA of Pseudomonas fluorescens (strain Pf0-1).